We begin with the raw amino-acid sequence, 161 residues long: Phosphopantetheine adenylyltransferase (161 aa).

Residue serine 9 coordinates substrate. ATP-binding positions include 9–10 (SF) and histidine 17. Substrate-binding residues include lysine 41, leucine 73, and lysine 87. ATP is bound by residues 88–90 (GLR), glutamate 98, and 123–129 (YSYLSSS).

This sequence belongs to the bacterial CoaD family. Homohexamer. It depends on Mg(2+) as a cofactor.

Its subcellular location is the cytoplasm. It carries out the reaction (R)-4'-phosphopantetheine + ATP + H(+) = 3'-dephospho-CoA + diphosphate. The protein operates within cofactor biosynthesis; coenzyme A biosynthesis; CoA from (R)-pantothenate: step 4/5. Reversibly transfers an adenylyl group from ATP to 4'-phosphopantetheine, yielding dephospho-CoA (dPCoA) and pyrophosphate. The protein is Phosphopantetheine adenylyltransferase of Clostridium novyi (strain NT).